The primary structure comprises 378 residues: MAVKVLVVDDSGFFRRRVSEILSADPSIQVVGTATNGKEAIDQALALKPDVITMDYEMPMMDGITAVRHIMQRCPTPVLMFSSLTHEGARVTLDALDAGAVDFLPKNFEDISRNPEKVKQLLCEKVHSISRSNRRFSAYSAPAPAAAPTPAPIPAAAPSSFGSHSAPARPAPAPAPTRAPAASASSPAPKRKNYKLVAIGTSTGGPVALQRVLTQLPASFPAPIVLIQHMPAAFTKAFAERLDKLCRISVKEAEDGDILRPGLALLAPGGKQMMIDGRGAVKILPGDERLNYKPCVDITFGSAAKSYSDKVLAVVLTGMGADGREGARLLKQGGSTVWAQDEASCVIYGMPMAIVKADLADAVYSLDDIGKHIVEACV.

Residues 4 to 121 enclose the Response regulatory domain; that stretch reads KVLVVDDSGF…SRNPEKVKQL (118 aa). Aspartate 55 carries the 4-aspartylphosphate modification. Positions 141-188 are disordered; it reads APAPAAAPTPAPIPAAAPSSFGSHSAPARPAPAPAPTRAPAASASSPA. Residues 145 to 155 show a composition bias toward pro residues; it reads AAAPTPAPIPA. Low complexity-rich tracts occupy residues 156–168 and 178–188; these read AAPS…SAPA and RAPAASASSPA. The 192-residue stretch at 187-378 folds into the CheB-type methylesterase domain; it reads PAPKRKNYKL…IGKHIVEACV (192 aa). Catalysis depends on residues serine 202, histidine 229, and aspartate 322.

It belongs to the CheB family. Post-translationally, phosphorylated by CheA. Phosphorylation of the N-terminal regulatory domain activates the methylesterase activity.

It localises to the cytoplasm. The enzyme catalyses [protein]-L-glutamate 5-O-methyl ester + H2O = L-glutamyl-[protein] + methanol + H(+). The catalysed reaction is L-glutaminyl-[protein] + H2O = L-glutamyl-[protein] + NH4(+). Functionally, involved in chemotaxis. Part of a chemotaxis signal transduction system that modulates chemotaxis in response to various stimuli. Catalyzes the demethylation of specific methylglutamate residues introduced into the chemoreceptors (methyl-accepting chemotaxis proteins or MCP) by CheR. Also mediates the irreversible deamidation of specific glutamine residues to glutamic acid. The sequence is that of Protein-glutamate methylesterase/protein-glutamine glutaminase 2 from Pseudomonas fluorescens (strain Pf0-1).